A 284-amino-acid polypeptide reads, in one-letter code: MNTVIMILVVMTIIGLIFGLVLAYVNKRFAMEVNPLVDLVEDVLPKGQCGGCGFAGCKAYAEAVVLDESVPPNLCVPGKAAVAEQVAKLTGKSAPPIEPRVAHVRCGGDCTKAVKNFEYEGIHDCVAANLLEGGPKACKYGCLGFGTCVKSCPFGAMAMGSNGLPIIDTDICTGCGTCVSACPKQVLGFRPVGSKVMVNCNSKNKGGAVRKACSVGCLGCGLCAKNCPNDAIKVENNLAVVDQSICASCSEATCLAKCPTGAIKAIVSGTDLQQQSKNEAAANS.

Residues 1-26 are hydrophobic; sequence MNTVIMILVVMTIIGLIFGLVLAYVN. In terms of domain architecture, 4Fe-4S spans 32-92; it reads EVNPLVDLVE…AEQVAKLTGK (61 aa). [4Fe-4S] cluster-binding residues include cysteine 49, cysteine 52, cysteine 57, cysteine 75, cysteine 138, cysteine 142, cysteine 148, cysteine 152, cysteine 172, cysteine 175, cysteine 178, cysteine 182, cysteine 217, cysteine 220, cysteine 223, cysteine 227, cysteine 246, cysteine 249, cysteine 254, and cysteine 258. 4Fe-4S ferredoxin-type domains lie at 133 to 162, 163 to 192, 206 to 237, and 239 to 269; these read GGPKACKYGCLGFGTCVKSCPFGAMAMGSN, GLPIIDTDICTGCGTCVSACPKQVLGFRPV, GGAVRKACSVGCLGCGLCAKNCPNDAIKVENN, and AVVDQSICASCSEATCLAKCPTGAIKAIVSG.

The protein belongs to the 4Fe4S bacterial-type ferredoxin family. RnfB subfamily. In terms of assembly, the complex is composed of six subunits: RnfA, RnfB, RnfC, RnfD, RnfE and RnfG. It depends on [4Fe-4S] cluster as a cofactor.

Its subcellular location is the cell membrane. Part of a membrane-bound complex that couples electron transfer with translocation of ions across the membrane. Couples electron transfer from reduced ferredoxin to NAD(+) with translocation of H(+) out of the cell. Essential for energy conservation during autotrophic growth. Contributes to ATP synthesis during heterotrophic growth. This is Proton-translocating ferredoxin:NAD(+) oxidoreductase complex subunit B from Clostridium ljungdahlii (strain ATCC 55383 / DSM 13528 / PETC).